A 237-amino-acid polypeptide reads, in one-letter code: MTLNKLVLIRHGESKWNNENRFTGWTDIDLSDQGRIEAKNAGQLLKQAGFIFDFAYTSVLKRAIHTLWYILDELDQAWLPVEKSWRLNERHYGALQGLNKKKITVEYGEEQVQQWRRSLNITPPELSDNDKRLPIYDIRYAKLSLDQLPKAESLAMTINRIIPYWKGEILPRINNGERVIIAAHGNSIRAIITLLDQLSENELIQLNIPTGVPIIYEFNSQIKTIKHYYLSIVNKDY.

Residues 10 to 17, 23 to 24, R62, 89 to 92, K100, 116 to 117, and 185 to 186 contribute to the substrate site; these read RHGESKWN, TG, ERHY, RR, and GN. The active-site Tele-phosphohistidine intermediate is the H11. E89 (proton donor/acceptor) is an active-site residue.

It belongs to the phosphoglycerate mutase family. BPG-dependent PGAM subfamily. In terms of assembly, homodimer.

The catalysed reaction is (2R)-2-phosphoglycerate = (2R)-3-phosphoglycerate. Its pathway is carbohydrate degradation; glycolysis; pyruvate from D-glyceraldehyde 3-phosphate: step 3/5. Its function is as follows. Catalyzes the interconversion of 2-phosphoglycerate and 3-phosphoglycerate. The protein is 2,3-bisphosphoglycerate-dependent phosphoglycerate mutase of Baumannia cicadellinicola subsp. Homalodisca coagulata.